We begin with the raw amino-acid sequence, 528 residues long: Sensory rhodopsin I transducer (528 aa).

The next 2 helical transmembrane spans lie at 11-31 (GAKLGVGYIATATLLITVGVV) and 35-55 (VASTVVAGIAGLLTLGSINAA). 2 HAMP domains span residues 55–107 (AETV…DRLS) and 142–195 (TAYQ…ETIE). Residues 214–455 (TSRRVQQEVD…ATADSIADVT (242 aa)) enclose the Methyl-accepting transducer domain. Glu-259 is subject to Glutamate methyl ester (Glu).

It belongs to the methyl-accepting chemotaxis (MCP) protein family. As to quaternary structure, interacts with Sop1.

It localises to the cell membrane. Transduces signals from the phototaxis receptor sensory rhodopsin I (Sop1). The polypeptide is Sensory rhodopsin I transducer (htr1) (Haloarcula marismortui (strain ATCC 43049 / DSM 3752 / JCM 8966 / VKM B-1809) (Halobacterium marismortui)).